The sequence spans 499 residues: T-cell activation inhibitor, mitochondrial (499 aa).

A coiled-coil region spans residues 206-233 (LRNSLPLRKELDRLKNELSELLQLSDIR).

Expressed in peripheral blood leukocytes, mainly in T-lymphocytes.

The protein localises to the mitochondrion. In terms of biological role, may regulate T-cell apoptosis. The polypeptide is T-cell activation inhibitor, mitochondrial (TCAIM) (Mus musculus (Mouse)).